A 674-amino-acid chain; its full sequence is Pesticidal crystal protein Cry24Aa (674 aa).

Belongs to the delta endotoxin family.

In terms of biological role, promotes colloidosmotic lysis by binding to the midgut epithelial cells of insects. In Bacillus thuringiensis subsp. jegathesan, this protein is Pesticidal crystal protein Cry24Aa (cry24Aa).